The chain runs to 182 residues: Bifunctional dihydrofolate reductase-thymidylate synthase (182 aa).

The region spanning 1 to 182 (AICACCKVLN…YFTRINNAYT (182 aa)) is the DHFR domain. Position 25-31 (25-31 (GLGNAGG)) interacts with NADP(+). D40 lines the substrate pocket. Residues 93–95 (KTS) and 114–117 (LSRT) contribute to the NADP(+) site. Substrate is bound by residues I154, Y160, and T175. 155–162 (GGASVYKE) contributes to the NADP(+) binding site.

In the N-terminal section; belongs to the dihydrofolate reductase family. This sequence in the C-terminal section; belongs to the thymidylate synthase family. In terms of assembly, homodimer.

The catalysed reaction is (6S)-5,6,7,8-tetrahydrofolate + NADP(+) = 7,8-dihydrofolate + NADPH + H(+). It carries out the reaction dUMP + (6R)-5,10-methylene-5,6,7,8-tetrahydrofolate = 7,8-dihydrofolate + dTMP. Its pathway is cofactor biosynthesis; tetrahydrofolate biosynthesis; 5,6,7,8-tetrahydrofolate from 7,8-dihydrofolate: step 1/1. Bifunctional enzyme. Involved in de novo dTMP biosynthesis. Key enzyme in folate metabolism. Catalyzes an essential reaction for de novo glycine and purine synthesis, DNA precursor synthesis, and for the conversion of dUMP to dTMP. This is Bifunctional dihydrofolate reductase-thymidylate synthase from Plasmodium vinckei.